The following is a 147-amino-acid chain: Ubiquitin-conjugating enzyme E2-17 kDa (147 aa).

Positions 1–147 (MALKRINKEL…AREWTRKYAM (147 aa)) constitute a UBC core domain. The Glycyl thioester intermediate role is filled by C85.

The protein belongs to the ubiquitin-conjugating enzyme family.

It catalyses the reaction S-ubiquitinyl-[E1 ubiquitin-activating enzyme]-L-cysteine + [E2 ubiquitin-conjugating enzyme]-L-cysteine = [E1 ubiquitin-activating enzyme]-L-cysteine + S-ubiquitinyl-[E2 ubiquitin-conjugating enzyme]-L-cysteine.. It functions in the pathway protein modification; protein ubiquitination. In terms of biological role, catalyzes the covalent attachment of ubiquitin to other proteins. Mediates the selective degradation of short-lived and abnormal proteins. Required for proper telomere behavior during cell divisions and possibly for ubiquitination of proteins involved in postmeiotic stages of spermatogenesis. Deletion mutations are lethal in homozygotes. This is Ubiquitin-conjugating enzyme E2-17 kDa (eff) from Drosophila melanogaster (Fruit fly).